Here is a 175-residue protein sequence, read N- to C-terminus: Nucleoside diphosphate kinase 6 (175 aa).

ATP is bound by residues K8, F57, R85, T91, R105, and N115. Residue H118 is the Pros-phosphohistidine intermediate of the active site.

It belongs to the NDK family. Mg(2+) serves as cofactor.

The catalysed reaction is a 2'-deoxyribonucleoside 5'-diphosphate + ATP = a 2'-deoxyribonucleoside 5'-triphosphate + ADP. It carries out the reaction a ribonucleoside 5'-diphosphate + ATP = a ribonucleoside 5'-triphosphate + ADP. Its function is as follows. Major role in the synthesis of nucleoside triphosphates other than ATP. The ATP gamma phosphate is transferred to the NDP beta phosphate via a ping-pong mechanism, using a phosphorylated active-site intermediate. The polypeptide is Nucleoside diphosphate kinase 6 (Nme6) (Rattus norvegicus (Rat)).